A 1785-amino-acid polypeptide reads, in one-letter code: Brefeldin A-inhibited guanine nucleotide-exchange protein 2 (1785 aa).

Met-1 carries the N-acetylmethionine modification. Residues 2 to 224 are DCB; DCB:DCB domain and DCB:HUS domain interaction; the sequence is QESQTKSMFV…KPQSPVIQAA (223 aa). Residues Ser-214, Ser-218, and Ser-227 each carry the phosphoserine modification. Residues 232 to 285 form a disordered region; it reads RLKHSQAQSKPTTPEKTDLTNGEHARSDSGKVSTENGDAPRERGSSLSGTDDGA. Phosphothreonine is present on Thr-244. Positions 244 to 260 are enriched in basic and acidic residues; the sequence is TPEKTDLTNGEHARSDS. A phosphoserine mark is found at Ser-277, Ser-348, and Ser-349. The HUS; DCB:HUS domain interaction stretch occupies residues 508–528; that stretch reads ADAQCVVDIYVNYDCDLNAAN. At Ser-614 the chain carries Phosphoserine. Thr-616 carries the post-translational modification Phosphothreonine. Ser-617 carries the phosphoserine modification. Thr-626 bears the Phosphothreonine mark. The region spanning 654–785 is the SEC7 domain; it reads FNKKPKRGIQ…IIMLTTDLHS (132 aa). A phosphoserine mark is found at Ser-700, Ser-1511, Ser-1513, Ser-1514, Ser-1525, Ser-1528, Ser-1534, and Ser-1782. Positions 1514 to 1532 are enriched in polar residues; the sequence is SIDKNPSERGQSQLSNPTD. Residues 1514–1535 form a disordered region; sequence SIDKNPSERGQSQLSNPTDDSW.

In terms of assembly, homodimer. Interacts with ARFGEF1/BIG1; both proteins are probably part of the same or very similar macromolecular complexes. Interacts with PRKAR1A, PRKAR2A, PRKAR1B, PRKAR2B, PPP1CC, PDE3A, TNFRSF1A, MYCBP and EXOC7. Interacts with GABRB1, GABRB2 and GABRB3. In vitro phosphorylated by PKA reducing its GEF activity and dephosphorylated by phosphatase PP1. As to expression, expressed in placenta, lung, heart, brain, kidney and pancreas.

It localises to the cytoplasm. It is found in the membrane. The protein localises to the golgi apparatus. The protein resides in the perinuclear region. Its subcellular location is the trans-Golgi network. It localises to the endosome. It is found in the cytoskeleton. The protein localises to the microtubule organizing center. The protein resides in the centrosome. Its subcellular location is the cell projection. It localises to the dendrite. It is found in the cytoplasmic vesicle. The protein localises to the synapse. With respect to regulation, inhibited by brefeldin A. Promotes guanine-nucleotide exchange on ARF1 and ARF3 and to a lower extent on ARF5 and ARF6. Promotes the activation of ARF1/ARF5/ARF6 through replacement of GDP with GTP. Involved in the regulation of Golgi vesicular transport. Required for the integrity of the endosomal compartment. Involved in trafficking from the trans-Golgi network (TGN) to endosomes and is required for membrane association of the AP-1 complex and GGA1. Seems to be involved in recycling of the transferrin receptor from recycling endosomes to the plasma membrane. Probably is involved in the exit of GABA(A) receptors from the endoplasmic reticulum. Involved in constitutive release of tumor necrosis factor receptor 1 via exosome-like vesicles; the function seems to involve PKA and specifically PRKAR2B. Proposed to act as A kinase-anchoring protein (AKAP) and may mediate crosstalk between Arf and PKA pathways. The polypeptide is Brefeldin A-inhibited guanine nucleotide-exchange protein 2 (ARFGEF2) (Homo sapiens (Human)).